A 672-amino-acid polypeptide reads, in one-letter code: NADPH-Fe(3+) oxidoreductase subunit beta (672 aa).

Residues Cys203, Cys207, Cys211, and Cys215 each coordinate [4Fe-4S] cluster. Residue 254 to 283 (KKVAIVGAGPAGLACAYYLALEGYPCTIYE) coordinates FAD. 388-421 (GKKVVVVGGGNTAIDCVRVALREGAEESTLLYRR) contributes to the NADP(+) binding site. 552 to 562 (TDLEGVFAGGD) lines the FAD pocket.

Heterotetramer with 2 alpha subunits. [4Fe-4S] cluster is required as a cofactor. The cofactor is FAD.

Its subcellular location is the cell membrane. Functionally, probably involved in acetate metabolism and not in the reduction of Fe(3+) chelates. May serve as a major route for NADP regeneration. This is NADPH-Fe(3+) oxidoreductase subunit beta (sfrB) from Geobacter sulfurreducens (strain DL-1 / KN400).